The primary structure comprises 477 residues: Adenylyl cyclase-associated protein 2 (477 aa).

An N-acetylalanine modification is found at alanine 2. 2 disordered regions span residues 224-262 (SILS…PSRS) and 274-324 (ITKG…HAPV). Residues 231–248 (GLPPPPPPPPPPGPPPPF) show a composition bias toward pro residues. Positions 300-318 (RSPTKTRTPSPTSSKSNSP) are enriched in low complexity. Residues serine 301 and serine 309 each carry the phosphoserine modification. The region spanning 318–455 (PQKHAPVLEL…QGDDYREFPI (138 aa)) is the C-CAP/cofactor C-like domain.

It belongs to the CAP family. In terms of tissue distribution, found at relatively high levels in testes, at moderate levels in brain, heart and skeletal muscle, at lower levels in lung, skin, kidney and small intestine, and is undetectable in liver or spleen.

The protein localises to the cell membrane. Its function is as follows. Involved in the regulation of actin polymerization. This is Adenylyl cyclase-associated protein 2 (Cap2) from Rattus norvegicus (Rat).